A 115-amino-acid polypeptide reads, in one-letter code: Large ribosomal subunit protein bL19 (115 aa).

It belongs to the bacterial ribosomal protein bL19 family.

Functionally, this protein is located at the 30S-50S ribosomal subunit interface and may play a role in the structure and function of the aminoacyl-tRNA binding site. The sequence is that of Large ribosomal subunit protein bL19 from Edwardsiella ictaluri (strain 93-146).